A 740-amino-acid chain; its full sequence is Autotransporter adhesin BtaE (740 aa).

Positions 1–11 are cleaved as a signal peptide; that stretch reads MFGLSVNHAYA. Positions 12–647 are surface exposed passenger domain; sequence GPGIFINDGT…LQTLDQANAY (636 aa). An outer membrane translocation of the passenger domain region spans residues 648-686; that stretch reads TDKKFGKLNEDIVATRIEARQAAAIGLAAASLRYDDRPG. 4 consecutive transmembrane segments (beta stranded) span residues 686–696, 700–710, 719–725, and 728–739; these read GKISAAIGGGF, EGAVALGLGHT, NLSAATS, and NWGMGAGFSYTF. Residues 687 to 740 are translocator domain; it reads KISAAIGGGFWRGEGAVALGLGHTSEDQRMRSNLSAATSGGNWGMGAGFSYTFN.

Belongs to the autotransporter-2 (AT-2) (TC 1.B.40) family. As to quaternary structure, homotrimer.

The protein localises to the cell surface. Its subcellular location is the cell outer membrane. Functionally, binds to hyaluronic acid and epithelial cells, and is required for full virulence in the mouse model. The sequence is that of Autotransporter adhesin BtaE from Brucella suis biovar 1 (strain 1330).